The chain runs to 523 residues: NADH-ubiquinone oxidoreductase chain 4 (523 aa).

14 helical membrane-spanning segments follow: residues Phe22–Leu42, Leu62–Phe82, Ile120–Trp140, Glu149–Asp169, Leu170–Val190, Phe204–Phe224, Ile246–Ile266, Pro276–Leu296, Phe303–Val323, Ile338–Asn358, Ile366–Leu386, Thr404–Gly424, Phe444–Cys464, and Phe488–Phe508.

The protein belongs to the complex I subunit 4 family.

The protein resides in the mitochondrion membrane. It carries out the reaction a ubiquinone + NADH + 5 H(+)(in) = a ubiquinol + NAD(+) + 4 H(+)(out). Its function is as follows. Core subunit of the mitochondrial membrane respiratory chain NADH dehydrogenase (Complex I) that is believed to belong to the minimal assembly required for catalysis. Complex I functions in the transfer of electrons from NADH to the respiratory chain. The immediate electron acceptor for the enzyme is believed to be ubiquinone. The protein is NADH-ubiquinone oxidoreductase chain 4 (ND4) of Prototheca wickerhamii.